A 503-amino-acid polypeptide reads, in one-letter code: Glycerol kinase (503 aa).

T14 is a binding site for ADP. T14, T15, and S16 together coordinate ATP. T14 serves as a coordination point for sn-glycerol 3-phosphate. R18 provides a ligand contact to ADP. R84, E85, Y136, and D246 together coordinate sn-glycerol 3-phosphate. Residues R84, E85, Y136, D246, and Q247 each contribute to the glycerol site. ADP is bound by residues T268 and G311. ATP is bound by residues T268, G311, Q315, and G412. Residues G412 and N416 each coordinate ADP. A compositionally biased stretch (basic and acidic residues) spans 468–481 (ERTFSPDSDNEKRE). The disordered stretch occupies residues 468–489 (ERTFSPDSDNEKRERRYKGWKK).

It belongs to the FGGY kinase family.

The enzyme catalyses glycerol + ATP = sn-glycerol 3-phosphate + ADP + H(+). The protein operates within polyol metabolism; glycerol degradation via glycerol kinase pathway; sn-glycerol 3-phosphate from glycerol: step 1/1. Its activity is regulated as follows. Inhibited by fructose 1,6-bisphosphate (FBP). Functionally, key enzyme in the regulation of glycerol uptake and metabolism. Catalyzes the phosphorylation of glycerol to yield sn-glycerol 3-phosphate. The polypeptide is Glycerol kinase (Haemophilus influenzae (strain ATCC 51907 / DSM 11121 / KW20 / Rd)).